A 158-amino-acid chain; its full sequence is G-protein-signaling modulator 3 (158 aa).

The segment at 1–53 (MEAERPQEDGEQSLPQDDQGWPPVNSTARPWRSAPPSPPPPGTRHTALGPRSG) is disordered. Residues S33 and S37 each carry the phosphoserine modification. Over residues 33–42 (SAPPSPPPPG) the composition is skewed to pro residues. Residues 43 to 53 (TRHTALGPRSG) are compositionally biased toward low complexity. 2 positions are modified to phosphoserine: S54 and S57. A Phosphothreonine modification is found at T60. The GoLoco 1 domain occupies 60-82 (TELLLDLVAEAQSRRLEEQRAAF). The tract at residues 78-97 (QRAAFHTPKVPPSLAPTPPR) is disordered. The span at 86-96 (KVPPSLAPTPP) shows a compositional bias: pro residues. GoLoco domains are found at residues 102-124 (KEQL…RSDP) and 130-153 (GQEL…RSRP).

Its subcellular location is the cytoplasm. In terms of biological role, interacts with subunit of G(i) alpha proteins and regulates the activation of G(i) alpha proteins. The polypeptide is G-protein-signaling modulator 3 (Gpsm3) (Rattus norvegicus (Rat)).